The chain runs to 332 residues: Adenosine deaminase (332 aa).

Residues His12 and His14 each coordinate Zn(2+). His14, Asp16, and Gly170 together coordinate substrate. His197 serves as a coordination point for Zn(2+). Residue Glu200 is the Proton donor of the active site. Zn(2+) is bound at residue Asp278. Asp279 contributes to the substrate binding site.

It belongs to the metallo-dependent hydrolases superfamily. Adenosine and AMP deaminases family. Adenosine deaminase subfamily. Requires Zn(2+) as cofactor.

It carries out the reaction adenosine + H2O + H(+) = inosine + NH4(+). The enzyme catalyses 2'-deoxyadenosine + H2O + H(+) = 2'-deoxyinosine + NH4(+). Catalyzes the hydrolytic deamination of adenosine and 2-deoxyadenosine. This chain is Adenosine deaminase, found in Erwinia tasmaniensis (strain DSM 17950 / CFBP 7177 / CIP 109463 / NCPPB 4357 / Et1/99).